The sequence spans 303 residues: Coenzyme PQQ synthesis protein B (303 aa).

It belongs to the PqqB family.

Its pathway is cofactor biosynthesis; pyrroloquinoline quinone biosynthesis. Its function is as follows. May be involved in the transport of PQQ or its precursor to the periplasm. This is Coenzyme PQQ synthesis protein B from Acinetobacter baumannii (strain ACICU).